The following is a 341-amino-acid chain: Hygromycin-B 4-O-kinase (341 aa).

Asp198 (proton acceptor) is an active-site residue.

Belongs to the aminoglycoside phosphotransferase family.

The catalysed reaction is hygromycin B + ATP = 4-O-phosphohygromycin B + ADP + H(+). In terms of biological role, the aminoglycoside phosphotransferases achieve inactivation of their antibiotic substrates by phosphorylation. Only phosphorylates hygromycin and closely related compounds such as demethyl analogs and destomycin. The sequence is that of Hygromycin-B 4-O-kinase (hph) from Escherichia coli.